We begin with the raw amino-acid sequence, 1589 residues long: Polyhomeotic-proximal chromatin protein (1589 aa).

A compositionally biased stretch (basic and acidic residues) spans 1 to 15; it reads MDRRALKFMQKRADT. Disordered regions lie at residues 1-85, 107-174, 252-290, 1112-1244, and 1260-1294; these read MDRR…GGKQ, KYDV…NCNS, LQQQLSEANGGGAASAGAGGAASPANSQQSQQQQHSTAI, LSTA…STTT, and AVSTASTTTTSSGTFITSCTSTTTTTTSSISNGSK. 3 stretches are compositionally biased toward low complexity: residues 18 to 28, 60 to 80, and 119 to 139; these read DTTTPVSTTAS, NHNNNNSSQHSHSHQQQQQQQ, and AQQQATSGTGPATGSGSVTPT. A compositionally biased stretch (polar residues) spans 154–174; sequence HTPSTPNRPSAPSTPNTNCNS. Residues 260–271 show a composition bias toward gly residues; the sequence is NGGGAASAGAGG. Positions 272-285 are enriched in low complexity; the sequence is AASPANSQQSQQQQ. Position 1145 is a phosphoserine (serine 1145). Threonine 1148 is subject to Phosphothreonine. A compositionally biased stretch (low complexity) spans 1157 to 1180; that stretch reads TTPKSSTPATVSASVEASSSTGEA. The segment covering 1189-1221 has biased composition (polar residues); sequence RSSTPSKGATTPTSKQSNAAVQPPSSTTPNSVS. 2 stretches are compositionally biased toward low complexity: residues 1230-1244 and 1260-1290; these read TCGSLTSATSTSTTT and AVSTASTTTTSSGTFITSCTSTTTTTTSSIS. Residues 1356–1389 form an FCS-type zinc finger; that stretch reads SAPGSDMVACEQCGKMEHKAKLKRKRYCSPGCSR. Cysteine 1365, cysteine 1368, cysteine 1383, and cysteine 1387 together coordinate Zn(2+). One can recognise an SAM domain in the interval 1513 to 1577; sequence WSVDDVSNFI…VAKVESIKEV (65 aa).

In terms of assembly, component of PRC1 complex, which contains many PcG proteins like Pc, ph, Scm, Psc, Sce and also chromatin-remodeling proteins such as histone deacetylases. This complex is distinct from the Esc/E(z) complex, at least composed of esc, E(z), Su(z)12, HDAC1/Rpd3 and Caf1-55. The 2 complexes however cooperate and interact together during the first 3 hours of development to establish PcG silencing. Interacts with the SAM domain of Scm via its SAM domain in vitro. Interacts with Trl in vivo and with corto in vitro. Salivary glands.

The protein resides in the nucleus. In terms of biological role, polycomb group (PcG) protein. PcG proteins act by forming multiprotein complexes, which are required to maintain the transcriptionally repressive state of homeotic genes throughout development. PcG proteins are not required to initiate repression, but to maintain it during later stages of development. Component of the PcG multiprotein PRC1 complex, a complex that acts via chromatin remodeling and modification of histones; it mediates monoubiquitination of histone H2A 'Lys-118', rendering chromatin heritably changed in its expressibility. Plays a role in regulating the expression of other pair-rule genes such as eve, ftz, and H. The protein is Polyhomeotic-proximal chromatin protein (ph-p) of Drosophila melanogaster (Fruit fly).